Reading from the N-terminus, the 693-residue chain is Golgin subfamily A member 6A (693 aa).

Residues 14–611 (LEESRQNKLA…KLLELQELVL (598 aa)) adopt a coiled-coil conformation. 3 disordered regions span residues 20–69 (NKLA…PGDS), 497–547 (LPGE…GTEQ), and 661–693 (NVEP…MQDT). Residues 54 to 69 (SPETTTSGGCHSPGDS) show a composition bias toward polar residues. Positions 537–547 (LPKEKADGTEQ) are enriched in basic and acidic residues. A compositionally biased stretch (polar residues) spans 676–693 (DNPTVQQIVQLSPVMQDT).

The protein belongs to the GOLGA6 family. As to expression, highly expressed in seminiferous tubes in testis. Highly expressed in spermatids, barely detectable in late pachytene spermatocytes, and not detectable in spermatogonia. Detected at intermediate levels in pancreas and lymph nodes, and at much lower levels in spleen, peripheral blood leukocytes, skeletal muscle, liver, lung, placenta, brain and heart.

This is Golgin subfamily A member 6A (GOLGA6A) from Homo sapiens (Human).